A 429-amino-acid chain; its full sequence is Divergent protein kinase domain 2A (429 aa).

Positions 1–34 are cleaved as a signal peptide; that stretch reads MLRLASLKFGRLFRYAKVLFAASLLVVMLLNTHS.

This sequence belongs to the DIPK family.

It is found in the cytoplasmic vesicle. Its subcellular location is the COPI-coated vesicle. The protein resides in the golgi apparatus. It localises to the secreted. Functionally, may play a role in cardiomyocyte proliferation through paracrine signaling and activation of the PPI3K-AKT-CDK7 signaling cascade. This chain is Divergent protein kinase domain 2A (dipk2a), found in Xenopus tropicalis (Western clawed frog).